A 498-amino-acid chain; its full sequence is Cytochrome P450 monooxygenase 71 (498 aa).

The chain crosses the membrane as a helical span at residues 7 to 24; it reads YVFALLGILATLYFVRWS. N425 carries N-linked (GlcNAc...) asparagine glycosylation. C440 provides a ligand contact to heme.

The protein belongs to the cytochrome P450 family. Heme serves as cofactor.

Its subcellular location is the membrane. Its pathway is secondary metabolite biosynthesis. In terms of biological role, cytochrome P450 monooxygenase that is able to use dehydroabietic acid and testosterone as substrates for oxidation, suggesting that the natural substrate(s) may be structurally related to steroid compounds. This chain is Cytochrome P450 monooxygenase 71, found in Postia placenta (strain ATCC 44394 / Madison 698-R) (Brown rot fungus).